The primary structure comprises 429 residues: UDP-N-acetylglucosamine 1-carboxyvinyltransferase (429 aa).

22–23 (KN) serves as a coordination point for phosphoenolpyruvate. Arg102 lines the UDP-N-acetyl-alpha-D-glucosamine pocket. The active-site Proton donor is Cys126. Residue Cys126 is modified to 2-(S-cysteinyl)pyruvic acid O-phosphothioketal. Residues 131–135 (RPVDL), Asp316, and Ile338 each bind UDP-N-acetyl-alpha-D-glucosamine.

This sequence belongs to the EPSP synthase family. MurA subfamily.

It is found in the cytoplasm. The enzyme catalyses phosphoenolpyruvate + UDP-N-acetyl-alpha-D-glucosamine = UDP-N-acetyl-3-O-(1-carboxyvinyl)-alpha-D-glucosamine + phosphate. Its pathway is cell wall biogenesis; peptidoglycan biosynthesis. In terms of biological role, cell wall formation. Adds enolpyruvyl to UDP-N-acetylglucosamine. In Methylobacterium sp. (strain 4-46), this protein is UDP-N-acetylglucosamine 1-carboxyvinyltransferase.